Consider the following 444-residue polypeptide: Type VII secretion system protein EssB (444 aa).

The Cytoplasmic portion of the chain corresponds to 1–229; it reads MVKNHNPKNE…RKVGHTVFKW (229 aa). The chain crosses the membrane as a helical span at residues 230-250; it reads VAIGMTTLSVLLIAFLAFLYF. Topologically, residues 251 to 444 are extracellular; sequence SVMKHNERIE…EKRQEAERKK (194 aa). Residues 366–444 are disordered; sequence KNNGDLSNDK…EKRQEAERKK (79 aa). Positions 372-444 are enriched in basic and acidic residues; it reads SNDKRSEETK…EKRQEAERKK (73 aa). Positions 387–443 form a coiled coil; it reads LQDILDKEKQVKDEKAKSEEEKAKAKDEKLKQQEENEKKQKEQAQKDKEKRQEAERK.

This sequence belongs to the EssB family. In terms of assembly, may oligomerize and interact with other membrane components to form the Ess system. Interacts with EsaA.

The protein resides in the cell membrane. Component of the type VII secretion system (Ess). Required for the secretion of EsxA and proper accumulation of EssB and EssD. In Staphylococcus aureus (strain USA300), this protein is Type VII secretion system protein EssB.